The primary structure comprises 1839 residues: DNA-directed RNA polymerase II subunit RPB1 (1839 aa).

Residues C66, C69, C76, H79, C106, C109, and C147 each contribute to the Zn(2+) site. Positions 152-174 (DIDDVQSHSTDEPVKKSRGGCGA) are disordered. A compositionally biased stretch (basic and acidic residues) spans 156–166 (VQSHSTDEPVK). Residue C172 coordinates Zn(2+). The DNA-binding element occupies 326–397 (TQKSGRPIKS…PETVTPYNIE (72 aa)). Mg(2+)-binding residues include D495, D497, and D499. The tract at residues 785–795 (GQQNVEGKRIP) is alpha-amanitin binding. The bridging helix stretch occupies residues 829–841 (PQEFFFHAMGGRE). Positions 1538–1726 (PSSSPGYSPS…PSYGPTSPSY (189 aa)) are enriched in low complexity. The disordered stretch occupies residues 1538–1839 (PSSSPGYSPS…DASKDDKGNP (302 aa)). A run of 27 repeats spans residues 1544–1550 (YSPSSPG), 1551–1557 (YSPTSPG), 1558–1564 (YSPTSPG), 1565–1571 (YSPTSPG), 1572–1578 (YSPTSPT), 1579–1585 (YSPSSPG), 1586–1592 (YSPTSPA), 1593–1599 (YSPTSPS), 1600–1606 (YSPTSPS), 1607–1613 (YSPTSPS), 1614–1620 (YSPTSPS), 1621–1627 (YSPTSPS), 1628–1634 (YSPTSPS), 1635–1641 (YSPTSPA), 1642–1648 (YSPTSPA), 1649–1655 (YSPTSPA), 1656–1662 (YSPTSPS), 1663–1669 (YSPTSPS), 1670–1676 (YSPTSPS), 1677–1683 (YSPTSPS), 1684–1690 (YSPTSPS), 1691–1697 (YSPTSPA), 1698–1704 (YSPTSPG), 1705–1711 (YSPTSPS), 1712–1718 (YSPTSPS), 1719–1725 (YGPTSPS), and 1726–1732 (YNPQSAK). Residues 1544–1813 (YSPSSPGYSP…LPGYSPSSTG (270 aa)) form a C-terminal domain (CTD); 37 X 7 AA tandem approximate repeats of Y-[GNS]-P-[QST]-[LNS]-[APT]-[AGKNRSTY] region. Over residues 1727–1745 (NPQSAKYSPSIAYSPSNAR) the composition is skewed to polar residues. The stretch at 1733–1738 (YSPSIA) is one 28; approximate repeat. 6 tandem repeats follow at residues 1739-1745 (YSPSNAR), 1752-1758 (YSPTSPN), 1759-1765 (YSPTSPS), 1766-1772 (YSPTSPS), 1773-1779 (YSPSSPT), and 1780-1786 (YSPSSPY). Positions 1747-1798 (SPASPYSPTSPNYSPTSPSYSPTSPSYSPSSPTYSPSSPYSSGASPDYSPSA) are enriched in low complexity. A 35; approximate repeat occupies 1794–1799 (YSPSAG). 2 repeat units span residues 1800–1806 (YSPTLPG) and 1807–1813 (YSPSSTG). Basic and acidic residues predominate over residues 1818–1839 (HEGDKKDKTGKKDASKDDKGNP).

This sequence belongs to the RNA polymerase beta' chain family. Component of the RNA polymerase II (Pol II) complex consisting of at least 12 subunits. Interacts with RDM1. Interacts (via CTD) with PRP40A, PRP40B, PRP40C and CYP59. Interacts with MEE12/CCG1 and MEE14/CBP1. Binds (via CTD) to ATX1, especially when phosphorylated on 'Ser-5' of the heptapeptide repeat. The tandem 7 residues repeats in the C-terminal domain (CTD) can be highly phosphorylated. The phosphorylation activates Pol II. Phosphorylation occurs mainly at residues 'Ser-2' and 'Ser-5' of the heptapeptide repeat. The phosphorylation state is believed to result from the balanced action of site-specific CTD kinases and phosphatase, and a 'CTD code' that specifies the position of Pol II within the transcription cycle has been proposed. ATX1 seems to regulate phosphorylation statment. 'Ser-2' and 'Ser-5' phosphorylation are repressed by flavopiridol (Flap) and seliciclib (Selic), inhibitors of CDK7 and CDK9.

The protein resides in the nucleus. It catalyses the reaction RNA(n) + a ribonucleoside 5'-triphosphate = RNA(n+1) + diphosphate. Functionally, DNA-dependent RNA polymerase catalyzes the transcription of DNA into RNA using the four ribonucleoside triphosphates as substrates. Largest and catalytic component of RNA polymerase II which synthesizes mRNA precursors and many functional non-coding RNAs. Forms the polymerase active center together with the second largest subunit. Pol II is the central component of the basal RNA polymerase II transcription machinery. It is composed of mobile elements that move relative to each other. NRPB1 is part of the core element with the central large cleft, the clamp element that moves to open and close the cleft and the jaws that are thought to grab the incoming DNA template. At the start of transcription, a single-stranded DNA template strand of the promoter is positioned within the central active site cleft of Pol II. A bridging helix emanates from NRPB1 and crosses the cleft near the catalytic site and is thought to promote translocation of Pol II by acting as a ratchet that moves the RNA-DNA hybrid through the active site by switching from straight to bent conformations at each step of nucleotide addition. During transcription elongation, Pol II moves on the template as the transcript elongates. Elongation is influenced by the phosphorylation status of the C-terminal domain (CTD) of Pol II largest subunit (NRPB1), which serves as a platform for assembly of factors that regulate transcription initiation, elongation, termination and mRNA processing. In Arabidopsis thaliana (Mouse-ear cress), this protein is DNA-directed RNA polymerase II subunit RPB1.